The chain runs to 142 residues: Interleukin-3 (142 aa).

The N-terminal stretch at 1–18 is a signal peptide; sequence MSHLPILLLLLLVSPGLQ. N-linked (GlcNAc...) asparagine glycans are attached at residues Asn33, Asn88, and Asn108. A disulfide bridge links Cys34 with Cys102.

It belongs to the IL-3 family. Monomer. Activated T-cells, mast cells, natural killer cells.

It is found in the secreted. Granulocyte/macrophage colony-stimulating factors are cytokines that act in hematopoiesis by controlling the production, differentiation, and function of 2 related white cell populations of the blood, the granulocytes and the monocytes-macrophages. Its function is as follows. This CSF induces granulocytes, macrophages, mast cells, stem cells, erythroid cells, eosinophils and megakaryocytes. The polypeptide is Interleukin-3 (IL3) (Saguinus oedipus (Cotton-top tamarin)).